The following is a 313-amino-acid chain: Urease accessory protein UreD (313 aa).

A disordered region spans residues 1–30 (MTDLSFPGQAASPGEGAGQTPSGGSGHRFD). The segment covering 15–26 (EGAGQTPSGGSG) has biased composition (gly residues).

It belongs to the UreD family. In terms of assembly, ureD, UreF and UreG form a complex that acts as a GTP-hydrolysis-dependent molecular chaperone, activating the urease apoprotein by helping to assemble the nickel containing metallocenter of UreC. The UreE protein probably delivers the nickel.

It is found in the cytoplasm. Functionally, required for maturation of urease via the functional incorporation of the urease nickel metallocenter. The protein is Urease accessory protein UreD of Chromohalobacter salexigens (strain ATCC BAA-138 / DSM 3043 / CIP 106854 / NCIMB 13768 / 1H11).